The primary structure comprises 139 residues: Small ribosomal subunit protein bS6 (139 aa).

Residues 119–139 (LKGASKVETPTGPESTDIQEK) are disordered. Over residues 130–139 (GPESTDIQEK) the composition is skewed to polar residues.

Belongs to the bacterial ribosomal protein bS6 family.

In terms of biological role, binds together with bS18 to 16S ribosomal RNA. This is Small ribosomal subunit protein bS6 from Borreliella burgdorferi (strain ZS7) (Borrelia burgdorferi).